A 228-amino-acid chain; its full sequence is Glutamate transport system permease protein GluC (228 aa).

A run of 5 helical transmembrane segments spans residues 16–36 (FWVT…FGTI), 64–84 (LTLV…LTLA), 100–120 (AVLG…RSGI), 145–165 (IIFP…LIAL), and 195–215 (LFVV…PMGL). An ABC transmembrane type-1 domain is found at 16 to 217 (FWVTIKLTIY…ILTLPMGLGL (202 aa)).

This sequence belongs to the binding-protein-dependent transport system permease family. HisMQ subfamily. The complex is composed of two ATP-binding proteins (GluA), two transmembrane proteins (GluC and GluD) and a solute-binding protein (GluB).

Its subcellular location is the cell membrane. In terms of biological role, part of the ABC transporter complex GluABCD involved in glutamate uptake. Probably responsible for the translocation of the substrate across the membrane. The protein is Glutamate transport system permease protein GluC of Corynebacterium glutamicum (strain ATCC 13032 / DSM 20300 / JCM 1318 / BCRC 11384 / CCUG 27702 / LMG 3730 / NBRC 12168 / NCIMB 10025 / NRRL B-2784 / 534).